A 348-amino-acid chain; its full sequence is Secreted frizzled-related protein 4 (348 aa).

Positions 1–18 are cleaved as a signal peptide; that stretch reads MLLSILVALCLCVRLALG. The 121-residue stretch at 19 to 139 folds into the FZ domain; that stretch reads VRGAPCEAVR…VYDRGVCISP (121 aa). 5 disulfide bridges follow: Cys24–Cys85, Cys32–Cys78, Cys69–Cys108, Cys97–Cys136, and Cys101–Cys125. 2 N-linked (GlcNAc...) asparagine glycosylation sites follow: Asn38 and Asn68. N-linked (GlcNAc...) asparagine glycans are attached at residues Asn116, Asn194, and Asn240. Positions 178 to 296 constitute an NTR domain; it reads CKCKKVKPTL…WEERLQEQQR (119 aa). Residues 289–303 show a composition bias toward basic and acidic residues; the sequence is ERLQEQQRTTQDKKQ. Residues 289-348 are disordered; that stretch reads ERLQEQQRTTQDKKQIASRTSRSNPPKPKGRSPASKPASPKKNIKARSAPKKSNPKKSTS. Residues 330 to 348 are compositionally biased toward basic residues; sequence KNIKARSAPKKSNPKKSTS.

Belongs to the secreted frizzled-related protein (sFRP) family. In terms of tissue distribution, expressed in the involuting mammary gland, ovarian corpus luteum and prostate. In ovaries, low levels found in granulosa cells. High levels in corpora lutea of pregnant animals.

It localises to the secreted. In terms of biological role, soluble frizzled-related proteins (sFRPS) function as modulators of Wnt signaling through direct interaction with Wnts. They have a role in regulating cell growth and differentiation in specific cell types. SFRP4 plays a role in bone morphogenesis. May also act as a regulator of adult uterine morphology and function. May also increase apoptosis during ovulation possibly through modulation of FZ1/FZ4/WNT4 signaling. Has phosphaturic effects by specifically inhibiting sodium-dependent phosphate uptake. The sequence is that of Secreted frizzled-related protein 4 (Sfrp4) from Rattus norvegicus (Rat).